A 157-amino-acid polypeptide reads, in one-letter code: Small ribosomal subunit protein uS7 (157 aa).

It belongs to the universal ribosomal protein uS7 family. As to quaternary structure, part of the 30S ribosomal subunit. Contacts proteins S9 and S11.

Its function is as follows. One of the primary rRNA binding proteins, it binds directly to 16S rRNA where it nucleates assembly of the head domain of the 30S subunit. Is located at the subunit interface close to the decoding center, probably blocks exit of the E-site tRNA. The sequence is that of Small ribosomal subunit protein uS7 from Phenylobacterium zucineum (strain HLK1).